A 181-amino-acid chain; its full sequence is Calmodulin-like protein 6 (181 aa).

EF-hand domains are found at residues 33–68 (EQIK…LGIN), 69–104 (PTKS…YHEK), 107–142 (NQES…AGEP), and 143–178 (LNEV…ESFK). The Ca(2+) site is built by aspartate 156, aspartate 158, aspartate 160, threonine 162, and glutamate 167.

Belongs to the calmodulin family. Calglandulin subfamily. Expressed in prostate, thymus, heart, skeleton muscle, bone marrow and ovary.

It is found in the cytoplasm. Its subcellular location is the nucleus. The sequence is that of Calmodulin-like protein 6 (CALML6) from Homo sapiens (Human).